Reading from the N-terminus, the 122-residue chain is Small ribosomal subunit protein uS13 (122 aa).

The tract at residues 95–122 (GLPVRGQRTHTNARTRKGPAKSIAGKKK) is disordered.

This sequence belongs to the universal ribosomal protein uS13 family. Part of the 30S ribosomal subunit. Forms a loose heterodimer with protein S19. Forms two bridges to the 50S subunit in the 70S ribosome.

In terms of biological role, located at the top of the head of the 30S subunit, it contacts several helices of the 16S rRNA. In the 70S ribosome it contacts the 23S rRNA (bridge B1a) and protein L5 of the 50S subunit (bridge B1b), connecting the 2 subunits; these bridges are implicated in subunit movement. Contacts the tRNAs in the A and P-sites. The sequence is that of Small ribosomal subunit protein uS13 from Nitrobacter winogradskyi (strain ATCC 25391 / DSM 10237 / CIP 104748 / NCIMB 11846 / Nb-255).